The sequence spans 159 residues: SsrA-binding protein (159 aa).

Belongs to the SmpB family.

The protein localises to the cytoplasm. Its function is as follows. Required for rescue of stalled ribosomes mediated by trans-translation. Binds to transfer-messenger RNA (tmRNA), required for stable association of tmRNA with ribosomes. tmRNA and SmpB together mimic tRNA shape, replacing the anticodon stem-loop with SmpB. tmRNA is encoded by the ssrA gene; the 2 termini fold to resemble tRNA(Ala) and it encodes a 'tag peptide', a short internal open reading frame. During trans-translation Ala-aminoacylated tmRNA acts like a tRNA, entering the A-site of stalled ribosomes, displacing the stalled mRNA. The ribosome then switches to translate the ORF on the tmRNA; the nascent peptide is terminated with the 'tag peptide' encoded by the tmRNA and targeted for degradation. The ribosome is freed to recommence translation, which seems to be the essential function of trans-translation. The protein is SsrA-binding protein of Actinobacillus pleuropneumoniae serotype 5b (strain L20).